Reading from the N-terminus, the 543-residue chain is Cytochrome P450 2U1 (543 aa).

4 helical membrane-spanning segments follow: residues 32–52 (PTGG…SWLW), 58–78 (GIPP…VLLP), 261–281 (VCLN…YLPF), and 342–362 (LFYI…NSLL). Position 490 (cysteine 490) interacts with heme. A helical transmembrane segment spans residues 495–515 (LAKMELFLMFVSLMQSFTFVL).

Belongs to the cytochrome P450 family. Heme serves as cofactor.

The protein localises to the endoplasmic reticulum membrane. The protein resides in the microsome membrane. Its subcellular location is the mitochondrion inner membrane. The enzyme catalyses an omega-methyl-long-chain fatty acid + reduced [NADPH--hemoprotein reductase] + O2 = an omega-hydroxy-long-chain fatty acid + oxidized [NADPH--hemoprotein reductase] + H2O + H(+). It catalyses the reaction (5Z,8Z,11Z,14Z)-eicosatetraenoate + reduced [NADPH--hemoprotein reductase] + O2 = 19-hydroxy-(5Z,8Z,11Z,14Z)-eicosatetraenoate + oxidized [NADPH--hemoprotein reductase] + H2O + H(+). It carries out the reaction (5Z,8Z,11Z,14Z)-eicosatetraenoate + reduced [NADPH--hemoprotein reductase] + O2 = 20-hydroxy-(5Z,8Z,11Z,14Z)-eicosatetraenoate + oxidized [NADPH--hemoprotein reductase] + H2O + H(+). The catalysed reaction is N-[(5Z,8Z,11Z,14Z)-eicosatetraenoyl]-serotonin + reduced [NADPH--hemoprotein reductase] + O2 = 2-oxo-N-[(5Z,8Z,11Z,14Z)-eicosatetraenoyl]-serotonin + oxidized [NADPH--hemoprotein reductase] + H2O + H(+). A cytochrome P450 monooxygenase involved in the metabolism of arachidonic acid and its conjugates. Mechanistically, uses molecular oxygen inserting one oxygen atom into a substrate, and reducing the second into a water molecule, with two electrons provided by NADPH via cytochrome P450 reductase (CPR; NADPH-ferrihemoprotein reductase). Acts as an omega and omega-1 hydroxylase for arachidonic acid and possibly for other long chain fatty acids. May modulate the arachidonic acid signaling pathway and play a role in other fatty acid signaling processes. May down-regulate the biological activities of N-arachidonoyl-serotonin, an endocannabinoid that has anti-nociceptive effects through inhibition of fatty acid amide hydrolase FAAH, TRPV1 receptor and T-type calcium channels. Catalyzes C-2 oxidation of the indole ring of N-arachidonoyl-serotonin forming a less active product 2-oxo-N-arachidonoyl-serotonin. The sequence is that of Cytochrome P450 2U1 (CYP2U1) from Bos taurus (Bovine).